A 1194-amino-acid polypeptide reads, in one-letter code: ATP-dependent RNA helicase DHX30 (1194 aa).

Over residues 1–10 (MFSLDSFRKD) the composition is skewed to basic and acidic residues. Residues 1 to 27 (MFSLDSFRKDRAQHRQRQCKLPPPRLP) are disordered. S6 carries the post-translational modification Phosphoserine. In terms of domain architecture, DRBM spans 53 to 121 (PKNLLNSVIG…QAAAAACQLF (69 aa)). The disordered stretch occupies residues 150-199 (ADSWWRPEPTMPPTSWRQLNPESIRPGGPGGLSRSLGREEEEDEEEELEE). The span at 188 to 199 (EEEEDEEEELEE) shows a compositional bias: acidic residues. A phosphoserine mark is found at S226 and S380. In terms of domain architecture, Helicase ATP-binding spans 444-612 (LNAIEQHPVV…FGGCPVIKVP (169 aa)). Residue 457-464 (GDTGCGKT) participates in ATP binding. The short motif at 559-562 (DEVH) is the DEAH box element. One can recognise a Helicase C-terminal domain in the interval 654-827 (LVTDLVLHID…NLVLQAKIHM (174 aa)).

This sequence belongs to the DEAD box helicase family. DEAH subfamily. As to quaternary structure, identified in a complex with TFAM and SSBP1. Interacts (via N-terminus) with ZC3HAV1 (via N-terminal domain) in an RNA-independent manner. Found in a complex with GRSF1, DDX28, FASTKD2 and FASTKD5.

It is found in the cytoplasm. The protein resides in the mitochondrion. Its subcellular location is the mitochondrion matrix. The protein localises to the mitochondrion nucleoid. It catalyses the reaction ATP + H2O = ADP + phosphate + H(+). Its function is as follows. RNA-dependent helicase. Plays an important role in the assembly of the mitochondrial large ribosomal subunit. Required for optimal function of the zinc-finger antiviral protein ZC3HAV1. Associates with mitochondrial DNA. Involved in nervous system development and differentiation through its involvement in the up-regulation of a number of genes which are required for neurogenesis, including GSC, NCAM1, neurogenin, and NEUROD. This chain is ATP-dependent RNA helicase DHX30 (DHX30), found in Pongo abelii (Sumatran orangutan).